The chain runs to 103 residues: MLNDLYEEIKLRKTQPREGSYTNYLFDKGLDKILKKVGEEATEVVIAAKNDNQELIAEVSDLAYHLLVLLAEKNIPLVAIQTELQKREGKLSTTRDRKEINDL.

This sequence belongs to the PRA-PH family.

The protein resides in the cytoplasm. The enzyme catalyses 1-(5-phospho-beta-D-ribosyl)-ATP + H2O = 1-(5-phospho-beta-D-ribosyl)-5'-AMP + diphosphate + H(+). It participates in amino-acid biosynthesis; L-histidine biosynthesis; L-histidine from 5-phospho-alpha-D-ribose 1-diphosphate: step 2/9. This is Phosphoribosyl-ATP pyrophosphatase (hisE) from Listeria monocytogenes serovar 1/2a (strain ATCC BAA-679 / EGD-e).